Consider the following 143-residue polypeptide: 16 kDa calcium-binding protein (143 aa).

EF-hand domains lie at 2–37 (SEEK…VGVC), 41–71 (ADKI…LPPR), 73–108 (KCVA…SGMD), and 109–143 (IDQN…QTYK). Asp-15, Asp-17, Asn-19, Glu-26, Asp-49, Asn-51, Asp-53, Lys-55, Glu-60, Asp-86, Asp-88, Ser-90, Lys-92, Glu-97, Asp-122, Asn-124, Asp-126, Glu-128, and Glu-133 together coordinate Ca(2+).

Found in eggs.

Calcium-binding protein. This Schistosoma mansoni (Blood fluke) protein is 16 kDa calcium-binding protein.